The sequence spans 396 residues: 8-amino-7-oxononanoate synthase (396 aa).

R21 provides a ligand contact to substrate. Position 108 to 109 (108 to 109) interacts with pyridoxal 5'-phosphate; it reads GY. H133 is a substrate binding site. Pyridoxal 5'-phosphate is bound by residues S179, H207, and T236. K239 carries the N6-(pyridoxal phosphate)lysine modification. T353 lines the substrate pocket.

This sequence belongs to the class-II pyridoxal-phosphate-dependent aminotransferase family. BioF subfamily. In terms of assembly, homodimer. The cofactor is pyridoxal 5'-phosphate.

It carries out the reaction 6-carboxyhexanoyl-[ACP] + L-alanine + H(+) = (8S)-8-amino-7-oxononanoate + holo-[ACP] + CO2. Its pathway is cofactor biosynthesis; biotin biosynthesis. In terms of biological role, catalyzes the decarboxylative condensation of pimeloyl-[acyl-carrier protein] and L-alanine to produce 8-amino-7-oxononanoate (AON), [acyl-carrier protein], and carbon dioxide. This chain is 8-amino-7-oxononanoate synthase, found in Hahella chejuensis (strain KCTC 2396).